The primary structure comprises 148 residues: Large ribosomal subunit protein bL9 (148 aa).

Belongs to the bacterial ribosomal protein bL9 family.

Its function is as follows. Binds to the 23S rRNA. This is Large ribosomal subunit protein bL9 from Stutzerimonas stutzeri (strain A1501) (Pseudomonas stutzeri).